The primary structure comprises 147 residues: MTDIVDLELRVLEESDLSSHLELLGHLTEAPPLSGVELANIADMRRRAGIVTKVFCHQPTGRIVGSASLMIQPKFTRGGRAVGHIEDVVVDPSYRGAGLGKALIMDLCEISRSKGCYKVILDSSEKSLPFYEKLGFRAHERQMRLDL.

In terms of domain architecture, N-acetyltransferase spans leucine 7–leucine 147. D-glucosamine 6-phosphate is bound by residues threonine 28 and glutamate 86–valine 88. Acetyl-CoA-binding positions include valine 88–valine 90 and glycine 96–lysine 101. D-glucosamine 6-phosphate-binding positions include tyrosine 117–lysine 118 and aspartate 122. Tyrosine 131–lysine 133 is a binding site for acetyl-CoA.

The protein belongs to the acetyltransferase family. GNA1 subfamily. In terms of assembly, homodimer. In terms of processing, contains poly-N-acetyllactosamines.

The protein resides in the glycosome. The catalysed reaction is D-glucosamine 6-phosphate + acetyl-CoA = N-acetyl-D-glucosamine 6-phosphate + CoA + H(+). Its pathway is nucleotide-sugar biosynthesis; UDP-N-acetyl-alpha-D-glucosamine biosynthesis; N-acetyl-alpha-D-glucosamine 1-phosphate from alpha-D-glucosamine 6-phosphate (route I): step 1/2. Its function is as follows. Involved in the biosynthesis of UDP-N-acetyl-alpha-D-glucosamine. Catalyzes the formation of N-acetyl-D-glucosamine 6-phosphate from acetyl-coenzyme A (acetyl-CoA) and D-glucosamine 6-phosphate. The chain is Glucosamine 6-phosphate N-acetyltransferase from Trypanosoma brucei brucei.